We begin with the raw amino-acid sequence, 1807 residues long: MWFPVTLLFLAGVAVATNNHEHAWETGNEYQYSVFGRTLAGVDKLKRQYTGIQYNGILTIQVKSPELLQAKFDNQHYAHIHQELSNGPDDFDDPKNVNYKRMPMSEKPFEIKLKHGIIRDLLFDRDVPTWEVNMMKAIVGQLQVDTQGENAINSKSIQVPSDESFAATFKAMEDSVSGKCEVLYEITPLTVNEIQAKQDRIPMPSLHSDGNHYEVKKLKNYERCQERQLYHYGFDIKSAGKKWAGQDKVISQLSVTEMVISGDLKRFTIQSTEMKNEIAVQPETSDSPIGNVYTITRLTLKKKNSISNSWFGPHEISNLESTGNLVYTFNNPFSDSDNRRVRHHSVSQNSEQENSSESSKSSSQSSSSSSSASSSSSSSSSSSSSSSSSSSSSSSSSSEEENENVVQTKAALQNIFLAPNIPLLPYFIGYKGKTILKSDKQNVMQFAKNLISEIAEEVQITSEGYEATMEKYTILKKLLRTMNRKQYAELEQYVLQFNKGSDSRANAWTTFRDAVLHAGTGPAYVTIENWIKSGQVKGAEAARLLSQLPKNVYLPTPNYVQAFFELIKSPMVTQQEYVNVSAPIALAELLRNSYIGQNYYPIYSFGFITLKKNDEVVGKYINYLANQLQQGYQENNSRKIQTYIFALGVTAHPKIISVFEPYLEHSLPASTYQRTLMVAALSDLAKVQPKLVGPIFYKLYLNENEAHEVRAMAVHEFILTDPPMITLQRIAKNTNYDTSKQVNAVVKSTLESLVHTKRSEWRHLANKARNVRYLVTSNNYGNWHSSGYHLDFQDWLVNGLSLQTIAGDDLIPKYVYVGVNSVFDFLDQPSVEAGYGLSSHRQFFNEISKQWYSHQADDERRRSRVEKLAQALQIKAKEQNNLEGHFLFNSVYDSAFYPYDRHRIREAVAALKQFLNGNNKLEGSAFNNYENIMSFANEDGLPFVYTLDAPTFTKAKVNFKQGGRTANSGTFQALIANNVQQQFGFVALFEHQKYIAGINNNRVLRVPVEYDVEFNSNNAKNFALKIRPQNLPRMGNELKLLHYSVVPFTTQQDLLDLKPTSNDKNTRPVFTSPVYKTTVQKDTFSIKVESDSIGKESDTESFVADVLRLTNANDDHYTKISTILTSDQIQKSEGHITMTYDTVTIGGNNDNSGQSSEEMESLHSISWKSNSKERRKQIANNLSKGIKSGEVYIFDVSYSVPMLHENEYVFTFGGMKSNSNQKLRGYFYWNSHAPQEVNYEVCFSHEMQYAPRATPLNFKYALKNSPRDEYKAVLKYGKTCATGNKVVITGSSSQSQQLRDIIENSSLPNNVWKRFQTGNKAVENCMKANDIAQMRDQIDVQFDLSNIVPESVRRYAKKIIEYLEKYVYKVCDNVSREEESEENTIKNTLLFASPVNRMWPNWLPQSVSDITSGWSPSFNSFGPSSESQWQTMRLNVADYPDEFESEKQSCTLDKDKVYTFDNQLYNVHLGKCKHVLLTTYPQDFHNRRNYIPENSKVAILAEDADNDSRNVYIWLGKQEIKLKKAGNNVQAVVNGQNVEISDKGYQKINGNEITFEILSLPDDSLSVVSEKYGINAVYDGKRVVISASDAYRNAVRGLCGNFDSRPNTDFVTPKNCLLTKPEEFAATYAMTQENCQGPAPENKRRAEQSTCHEFPENEQMNVISDREAGRMMTEGVNWGYHQANRNKEHGRGNKSHQNNKKQYQANSQESGSSESRNDKKKHNIVYRTRVVEEGDEICFTTTPLPACRQGARPTERYPKKADLYCMPRNDQSLDLKRRVEDGANPDFTRKSVSRMQVFQVPVSCSAA.

The signal sequence occupies residues 1–16 (MWFPVTLLFLAGVAVA). The region spanning 24–819 (WETGNEYQYS…LIPKYVYVGV (796 aa)) is the Vitellogenin domain. C180 and C224 form a disulfide bridge. The interval 334-402 (SDSDNRRVRH…SSSSSSEEEN (69 aa)) is disordered. Residues 346 to 397 (VSQNSEQENSSESSKSSSQSSSSSSSASSSSSSSSSSSSSSSSSSSSSSSSS) are compositionally biased toward low complexity. N354, N579, N635, N1181, N1304, N1373, and N1506 each carry an N-linked (GlcNAc...) asparagine glycan. The region spanning 1448–1636 (QSCTLDKDKV…TYAMTQENCQ (189 aa)) is the VWFD domain. 2 cysteine pairs are disulfide-bonded: C1450/C1599 and C1472/C1635. 2 disordered regions span residues 1635-1655 (CQGPAPENKRRAEQSTCHEFP) and 1684-1723 (NRNKEHGRGNKSHQNNKKQYQANSQESGSSESRNDKKKHN). A glycan (N-linked (GlcNAc...) asparagine) is linked at N1693. Residues 1700–1714 (KKQYQANSQESGSSE) show a composition bias toward polar residues.

Its subcellular location is the secreted. Functionally, precursor of the egg-yolk proteins that are sources of nutrients during embryonic development. The polypeptide is Vitellogenin-2 (Solenopsis invicta (Red imported fire ant)).